The sequence spans 316 residues: Beta-ketoacyl-[acyl-carrier-protein] synthase III 1 (316 aa).

Active-site residues include C112 and H243. The segment at 244 to 248 (QANYR) is ACP-binding. N273 is a catalytic residue.

The protein belongs to the thiolase-like superfamily. FabH family. In terms of assembly, homodimer.

The protein localises to the cytoplasm. The catalysed reaction is malonyl-[ACP] + acetyl-CoA + H(+) = 3-oxobutanoyl-[ACP] + CO2 + CoA. The protein operates within lipid metabolism; fatty acid biosynthesis. Functionally, catalyzes the condensation reaction of fatty acid synthesis by the addition to an acyl acceptor of two carbons from malonyl-ACP. Catalyzes the first condensation reaction which initiates fatty acid synthesis and may therefore play a role in governing the total rate of fatty acid production. Possesses both acetoacetyl-ACP synthase and acetyl transacylase activities. Its substrate specificity determines the biosynthesis of branched-chain and/or straight-chain of fatty acids. The protein is Beta-ketoacyl-[acyl-carrier-protein] synthase III 1 of Vibrio vulnificus (strain CMCP6).